The following is a 272-amino-acid chain: MSRVGVMVLGPAGAGKSTFCNSIISHMQTVGRRAHIVNLDPAAEATKYEFTIDIRDLISLDDVMEEMDLGPNGALIYCFEYLLKNLDWLDEEIGDFNDEYLIFDCPGQIELYTHIPVLPNIVRHLTQQLNFNLCATYLLEAPFVIDSSKFFSGALSAMSAMILLELPHINVLSKLDLIKGDINKKKLKRFLNPDAMLLMETEGMNQASNPKFLRLNQCIANLVDDFGMVQFLPLESNNPDSIETILSYVDDITQWAEGQEQKEPNDQIDVEE.

Gly-13–Thr-18 contacts GTP. Positions Gly-70–Asn-72 match the Gly-Pro-Asn (GPN)-loop; involved in dimer interface motif. Ser-173–Asp-176 lines the GTP pocket.

It belongs to the GPN-loop GTPase family. In terms of assembly, heterodimers with NPA3/GPN1 or GPN2. Binds to RNA polymerase II (RNAPII).

Small GTPase required for proper nuclear localization of RNA polymerase II and III (RNAPII and RNAPIII). May act at an RNAP assembly step prior to nuclear import. Promotes sister chromatid separation during anaphase. The chain is GPN-loop GTPase 3 from Saccharomyces cerevisiae (strain ATCC 204508 / S288c) (Baker's yeast).